Reading from the N-terminus, the 185-residue chain is Elongation factor P 1 (185 aa).

Belongs to the elongation factor P family.

The protein localises to the cytoplasm. It participates in protein biosynthesis; polypeptide chain elongation. Its function is as follows. Involved in peptide bond synthesis. Stimulates efficient translation and peptide-bond synthesis on native or reconstituted 70S ribosomes in vitro. Probably functions indirectly by altering the affinity of the ribosome for aminoacyl-tRNA, thus increasing their reactivity as acceptors for peptidyl transferase. The sequence is that of Elongation factor P 1 (efp1) from Chlamydia caviae (strain ATCC VR-813 / DSM 19441 / 03DC25 / GPIC) (Chlamydophila caviae).